We begin with the raw amino-acid sequence, 296 residues long: GTPase Era (296 aa).

An Era-type G domain is found at 2-171 (KAGFIAVVGR…LEALDPYLED (170 aa)). Positions 10–17 (GRPNVGKS) are G1. 10-17 (GRPNVGKS) contributes to the GTP binding site. The segment at 36–40 (GTTRD) is G2. Residues 57-60 (DTPG) form a G3 region. Residues 57-61 (DTPGI) and 120-123 (NKVD) each bind GTP. Residues 120–123 (NKVD) are G4. A G5 region spans residues 150–152 (ASG). A KH type-2 domain is found at 202–279 (TRDEIPHSVA…YLGLWVKVKD (78 aa)).

This sequence belongs to the TRAFAC class TrmE-Era-EngA-EngB-Septin-like GTPase superfamily. Era GTPase family. As to quaternary structure, monomer.

It is found in the cytoplasm. The protein localises to the cell inner membrane. Functionally, an essential GTPase that binds both GDP and GTP, with rapid nucleotide exchange. Plays a role in 16S rRNA processing and 30S ribosomal subunit biogenesis and possibly also in cell cycle regulation and energy metabolism. The protein is GTPase Era of Fusobacterium nucleatum subsp. nucleatum (strain ATCC 25586 / DSM 15643 / BCRC 10681 / CIP 101130 / JCM 8532 / KCTC 2640 / LMG 13131 / VPI 4355).